The sequence spans 397 residues: Antiviral protein SKI8 (397 aa).

7 WD repeats span residues 21 to 42 (SVSACNSFTVSCSGDGYLKVWD), 67 to 101 (HVDVLQAIERDAFELCLVATTSFSGDLLFYRITRE), 126 to 157 (ALKWGASNDRLLSHRLVATDVKGTTYIWKFHP), 191 to 213 (SVDISERGLIATGFNNGTVQISE), 238 to 264 (SVKFSPQGSLLAIAHDSNSFGCITLYE), 296 to 319 (SLSFNDSGETLCSAGWDGKLRFWD), and 359 to 392 (DVKFLKKGWRSGMGADLNESLCCVCLDRSIRWFR).

It belongs to the SKI8 family. In terms of assembly, component of the SKI complex composed of at least SKI2, SKI3 and SKI8. The SKI complex interacts with SKI7, which makes the link between the SKI complex and the exosome in order to perform mRNA degradation.

The protein resides in the cytoplasm. It is found in the nucleus. It localises to the chromosome. Functionally, involved in double-strand break (DSB) formation during meiotic recombination through stabilization of SPO11 association with meiotic chromosome and helping SPO11 to recruit other DSB proteins like REC102 and REC104 to meiotic chromosomes. Also a component of the SKI complex involved in 3'-mRNA degradation pathway. Represses dsRNA virus propagation by specifically blocking translation of viral mRNAs, perhaps recognizing the absence of CAP or poly(A). Essential for controlling the propagation of M double-stranded RNA (dsRNA) and thus for preventing virus-induced cytopathology. The protein is Antiviral protein SKI8 (SKI8) of Saccharomyces cerevisiae (strain ATCC 204508 / S288c) (Baker's yeast).